The following is a 435-amino-acid chain: Proline--tRNA ligase (435 aa).

The protein belongs to the class-II aminoacyl-tRNA synthetase family. ProS type 2 subfamily. In terms of assembly, homodimer.

It localises to the cytoplasm. The catalysed reaction is tRNA(Pro) + L-proline + ATP = L-prolyl-tRNA(Pro) + AMP + diphosphate. In terms of biological role, catalyzes the attachment of proline to tRNA(Pro) in a two-step reaction: proline is first activated by ATP to form Pro-AMP and then transferred to the acceptor end of tRNA(Pro). In Sulfurimonas denitrificans (strain ATCC 33889 / DSM 1251) (Thiomicrospira denitrificans (strain ATCC 33889 / DSM 1251)), this protein is Proline--tRNA ligase (proS).